We begin with the raw amino-acid sequence, 971 residues long: Endoplasmic reticulum calcium ATPase srcA (971 aa).

Residues 1–25 (MNNEALAEDPPTPLWELVLEQFKDQ) lie on the Cytoplasmic side of the membrane. A helical membrane pass occupies residues 26–46 (LVLILLGSAAVSFVLALFEEG). The Lumenal segment spans residues 47–49 (DDW). Residues 50–70 (TAFVDPVVILTILILNAVVGV) form a helical membrane-spanning segment. The Cytoplasmic segment spans residues 71-217 (TQESSAEKAI…PTPLKQKLND (147 aa)). Residues 218–238 (FGDMLAKVITVICVLVWLINV) traverse the membrane as a helical segment. Residues 239-262 (EHFNDPAHGGWAKGAIYYLKIAVS) lie on the Lumenal side of the membrane. Residues 263 to 283 (LGVAAIPEGLAVVITTCLALG) traverse the membrane as a helical segment. Ca(2+)-binding residues include valine 265, alanine 266, isoleucine 268, and glutamate 270. Residues 284 to 718 (TRKMAAKNAV…GRSIYSNTQQ (435 aa)) are Cytoplasmic-facing. Residue aspartate 312 is the 4-aspartylphosphate intermediate of the active site. Mg(2+) is bound by residues aspartate 312 and threonine 314. ATP is bound by residues threonine 314, glutamate 402, arginine 453, lysine 473, arginine 518, arginine 637, and lysine 643. Aspartate 662 is a Mg(2+) binding site. Asparagine 665 contributes to the ATP binding site. The chain crosses the membrane as a helical span at residues 719 to 741 (FIRYLISSNIGEVVSIFLTAALG). Ca(2+) contacts are provided by asparagine 727 and glutamate 730. Residues 742 to 750 (MPEALIPVQ) are Lumenal-facing. The chain crosses the membrane as a helical span at residues 751-770 (LLWVNLVTDGLPATALSFNP). Residues asparagine 755, threonine 758, and aspartate 759 each coordinate Ca(2+). At 771 to 795 (PDHDVMRRAPRKRDEPLVGGWLLFR) the chain is on the cytoplasmic side. The helical transmembrane segment at 796 to 816 (YLAIGTYVGAATVFGYIWWFV) threads the bilayer. The Lumenal segment spans residues 817–854 (YNPEGPQISFWQLSHFHKCSAQFPEIGCEMFSNEMSRS). Residues 855-875 (ASTVSLSILVVIEMLNAMNAL) form a helical membrane-spanning segment. Glutamate 867 lines the Ca(2+) pocket. Residues 876 to 891 (SSSESLLAFPLWNNMM) lie on the Cytoplasmic side of the membrane. Residues 892-912 (LVYAIILSMTLHFAILYIPFL) form a helical membrane-spanning segment. At 913 to 917 (QTLFS) the chain is on the lumenal side. A helical membrane pass occupies residues 918–938 (ILPLNWTEWKAVLAISAPVVA). At 939–971 (IDELLKYAERRLYTLPAIAGEQQNGVAFKPKKA) the chain is on the cytoplasmic side.

Belongs to the cation transport ATPase (P-type) (TC 3.A.3) family. Mg(2+) serves as cofactor.

The protein localises to the endoplasmic reticulum membrane. It carries out the reaction Ca(2+)(in) + ATP + H2O = Ca(2+)(out) + ADP + phosphate + H(+). Its function is as follows. Magnesium-dependent enzyme catalyzes the hydrolysis of ATP coupled with the translocation of calcium from the cytosol to the endoplasmic reticulum lumen. Its activity is coupled to the unfolded protein response (UPR) and Ca(2+) import into the endoplasmioc reticulum is important for redox homeostasis, virulence, cell wall biosynthesis, and resistance to antifungal compounds that inhibit Ca2+ signaling. With pmrA, promotes radial growth and conidiation. The polypeptide is Endoplasmic reticulum calcium ATPase srcA (srcA) (Aspergillus fumigatus (strain ATCC MYA-4609 / CBS 101355 / FGSC A1100 / Af293) (Neosartorya fumigata)).